Here is a 383-residue protein sequence, read N- to C-terminus: MSKQDYYKTLGVTQSSDEREIKRAYKKLAMKYHPDRNPGNKNSEEKFKTIKEAYEILIDPKKRTAYDQYGHSAFEQGNSTGNNNTFTHSFSSNSDFSDIFGDVFGDIFGGTRKQKSERQGSDLRYDMTLTLEEAVRGTIKEIKIPTLQKCPTCYGYGTKTGTKPQFCPTCRGNGQIQMRKGFFTVQQTCPQCHGEGNFIRDPCRRCHGNGRIEISKTLSVKVPPGVDTNDKIRLNNEGEAGENGAMAGNLYVQINVKKHPIFEREENNLYCEVPISFSMAALGGEIEVPTLDGKVKLKIPCETQSGKLLRIRGRGVKSIRNNNRQGDLLCRIIVETPVNLNDLQKDLLYKLGESFNGFKGEKNSPKSKRFFEGVKRFFDDLTR.

The 66-residue stretch at 5 to 70 folds into the J domain; sequence DYYKTLGVTQ…KKRTAYDQYG (66 aa). A CR-type zinc finger spans residues 137–215; that stretch reads GTIKEIKIPT…CHGNGRIEIS (79 aa). Zn(2+) is bound by residues C150, C153, C167, C170, C189, C192, C203, and C206. 4 CXXCXGXG motif repeats span residues 150–157, 167–174, 189–196, and 203–210; these read CPTCYGYG, CPTCRGNG, CPQCHGEG, and CRRCHGNG.

The protein belongs to the DnaJ family. As to quaternary structure, homodimer. Zn(2+) serves as cofactor.

The protein localises to the cytoplasm. In terms of biological role, participates actively in the response to hyperosmotic and heat shock by preventing the aggregation of stress-denatured proteins and by disaggregating proteins, also in an autonomous, DnaK-independent fashion. Unfolded proteins bind initially to DnaJ; upon interaction with the DnaJ-bound protein, DnaK hydrolyzes its bound ATP, resulting in the formation of a stable complex. GrpE releases ADP from DnaK; ATP binding to DnaK triggers the release of the substrate protein, thus completing the reaction cycle. Several rounds of ATP-dependent interactions between DnaJ, DnaK and GrpE are required for fully efficient folding. Also involved, together with DnaK and GrpE, in the DNA replication of plasmids through activation of initiation proteins. This Buchnera aphidicola subsp. Baizongia pistaciae (strain Bp) protein is Chaperone protein DnaJ.